Here is a 203-residue protein sequence, read N- to C-terminus: Large ribosomal subunit protein bL25 (203 aa).

The protein belongs to the bacterial ribosomal protein bL25 family. CTC subfamily. In terms of assembly, part of the 50S ribosomal subunit; part of the 5S rRNA/L5/L18/L25 subcomplex. Contacts the 5S rRNA. Binds to the 5S rRNA independently of L5 and L18.

This is one of the proteins that binds to the 5S RNA in the ribosome where it forms part of the central protuberance. This chain is Large ribosomal subunit protein bL25, found in Pseudomonas syringae pv. tomato (strain ATCC BAA-871 / DC3000).